The primary structure comprises 505 residues: MSQHVMFNAVLSSHPALFIQGEWRIGNGVSFEKQDPMSQQRLWQARAADHTDVTLACHAARAAFPAWARASLEQRATVIQQFAALLEQHKQSLARTISLETSKPYWETLTEVQAMIGKVAISLQAYQTRTGHSQTPMGDSMSVLRHRPHGVLAVFGPYNFPGHLPNGHIVPALLAGNTVVFKPSELTPWTAEETVKLWQQAGIPDGVLNLVQGGRETGEALAAQPDIDGLLFTGSAHTGYHLHRQLAGQPEKMLALEMGGNNALIVEQVKDRDAVVNLAIQSPFISAGQRCTCSRRLLVKTGAEGDAFLLRFTAVAQALRIGRWDEQPAPFMGAVISSQAAERMLAAQQHLLLLGGESLLNMTRPDSQSALLTPGIIDITNISEVPDEEYFGPLVSVIRYTDFTEALKIANQTRFGLAVGLVSEDRQQFEQLLLEARAGIVNWNKPLTGASSAAPFGGVGASGNHRPSAFYAADYCAWPMASLECEHLTLPATLSPGISFDLPKV.

An NAD(+)-binding site is contributed by 234 to 239; that stretch reads GSAHTG. Active-site residues include Glu-257 and Cys-291.

This sequence belongs to the aldehyde dehydrogenase family. AstD subfamily.

It catalyses the reaction N-succinyl-L-glutamate 5-semialdehyde + NAD(+) + H2O = N-succinyl-L-glutamate + NADH + 2 H(+). Its pathway is amino-acid degradation; L-arginine degradation via AST pathway; L-glutamate and succinate from L-arginine: step 4/5. Catalyzes the NAD-dependent reduction of succinylglutamate semialdehyde into succinylglutamate. This is N-succinylglutamate 5-semialdehyde dehydrogenase from Yersinia pestis (strain Pestoides F).